A 967-amino-acid polypeptide reads, in one-letter code: Cytosolic carboxypeptidase 2 (967 aa).

The Peptidase M14 domain occupies 330–601 (YPYTYSDLQR…HFCDTLLDYC (272 aa)). Residues H396, E399, and H492 each coordinate Zn(2+). Catalysis depends on E565, which acts as the Proton donor/acceptor. Disordered regions lie at residues 679–706 (KRRL…LHEA) and 944–967 (PGIS…NTMK). The span at 946-967 (ISSSEPHFPNSSEDITVRNTMK) shows a compositional bias: polar residues.

The protein belongs to the peptidase M14 family. Zn(2+) serves as cofactor.

Its subcellular location is the cytoplasm. The protein localises to the cytosol. The protein resides in the cytoskeleton. It is found in the microtubule organizing center. It localises to the centrosome. Its subcellular location is the centriole. The protein localises to the cilium basal body. The catalysed reaction is (L-glutamyl)(n+1)-gamma-L-glutamyl-L-glutamyl-[protein] + H2O = (L-glutamyl)(n)-gamma-L-glutamyl-L-glutamyl-[protein] + L-glutamate. Functionally, metallocarboxypeptidase that mediates deglutamylation of target proteins. Catalyzes the deglutamylation of polyglutamate side chains generated by post-translational polyglutamylation in proteins such as tubulins. Also removes gene-encoded polyglutamates from the carboxy-terminus of target proteins such as MYLK. Does not show detyrosinase or deglycylase activities from the carboxy-terminus of tubulin. In terms of biological role, metallocarboxypeptidase that mediates deglutamylation of tubulin and non-tubulin target proteins. Catalyzes the removal of polyglutamate side chains present on the gamma-carboxyl group of glutamate residues within the C-terminal tail of tubulin protein. Specifically cleaves tubulin long-side-chains, while it is not able to remove the branching point glutamate. Also catalyzes the removal of polyglutamate residues from the carboxy-terminus of non-tubulin proteins. This chain is Cytosolic carboxypeptidase 2 (agbl2), found in Xenopus tropicalis (Western clawed frog).